Consider the following 194-residue polypeptide: Peptidyl-tRNA hydrolase (194 aa).

Residue Y16 coordinates tRNA. The Proton acceptor role is filled by H21. F67, N69, and N115 together coordinate tRNA.

Belongs to the PTH family. In terms of assembly, monomer.

It localises to the cytoplasm. It carries out the reaction an N-acyl-L-alpha-aminoacyl-tRNA + H2O = an N-acyl-L-amino acid + a tRNA + H(+). In terms of biological role, hydrolyzes ribosome-free peptidyl-tRNAs (with 1 or more amino acids incorporated), which drop off the ribosome during protein synthesis, or as a result of ribosome stalling. Catalyzes the release of premature peptidyl moieties from peptidyl-tRNA molecules trapped in stalled 50S ribosomal subunits, and thus maintains levels of free tRNAs and 50S ribosomes. The chain is Peptidyl-tRNA hydrolase from Citrobacter koseri (strain ATCC BAA-895 / CDC 4225-83 / SGSC4696).